The sequence spans 378 residues: Probable pectin lyase C (378 aa).

The first 18 residues, Met1–Ala18, serve as a signal peptide directing secretion. Intrachain disulfides connect Cys81–Cys100 and Cys90–Cys220. N-linked (GlcNAc...) asparagine glycosylation is present at Asn123. The active site involves Arg250. A disulfide bridge links Cys316 with Cys324.

Belongs to the polysaccharide lyase 1 family.

The protein resides in the secreted. It carries out the reaction Eliminative cleavage of (1-&gt;4)-alpha-D-galacturonan methyl ester to give oligosaccharides with 4-deoxy-6-O-methyl-alpha-D-galact-4-enuronosyl groups at their non-reducing ends.. Functionally, pectinolytic enzymes consist of four classes of enzymes: pectin lyase, polygalacturonase, pectin methylesterase and rhamnogalacturonase. Among pectinolytic enzymes, pectin lyase is the most important in depolymerization of pectin, since it cleaves internal glycosidic bonds of highly methylated pectins. The polypeptide is Probable pectin lyase C (pelC) (Aspergillus niger).